Reading from the N-terminus, the 142-residue chain is Universal stress protein C (142 aa).

It belongs to the universal stress protein A family.

The protein resides in the cytoplasm. Required for resistance to DNA-damaging agents. The sequence is that of Universal stress protein C (uspC) from Salmonella typhimurium (strain LT2 / SGSC1412 / ATCC 700720).